Reading from the N-terminus, the 262-residue chain is LysM and putative peptidoglycan-binding domain-containing protein 3 (262 aa).

Residues methionine 1 to glycine 218 lie on the Extracellular side of the membrane. The LysM domain occupies isoleucine 70–isoleucine 114. A helical membrane pass occupies residues tryptophan 219 to leucine 239. At tyrosine 240–serine 262 the chain is on the cytoplasmic side.

It localises to the cell membrane. Its subcellular location is the golgi apparatus. Functionally, essential for Golgi structural integrity. The chain is LysM and putative peptidoglycan-binding domain-containing protein 3 (lysmd3) from Xenopus tropicalis (Western clawed frog).